The sequence spans 613 residues: Phostensin (613 aa).

The span at 18 to 33 (EEASVRGREKAERERL) shows a compositional bias: basic and acidic residues. Disordered stretches follow at residues 18-231 (EEAS…SAYQ) and 266-500 (GEER…AVPG). Phosphoserine is present on residues Ser-54, Ser-125, Ser-133, Ser-175, and Ser-195. Composition is skewed to basic and acidic residues over residues 104–154 (RSEE…ERRL) and 167–191 (LEAR…EAWK). Position 199 is a phosphothreonine (Thr-199). The span at 199-221 (TPERSLRLAESREQSPRRKEVES) shows a compositional bias: basic and acidic residues. A Phosphoserine modification is found at Ser-224. Over residues 266 to 282 (GEERQDYSEECGRKEEW) the composition is skewed to basic and acidic residues. Over residues 295–309 (LSETLTREAQGNSSA) the composition is skewed to polar residues. Composition is skewed to basic and acidic residues over residues 314-327 (AEQR…RGMK), 340-350 (KAREWTPRDIE), and 357-366 (EPPESAEKLL). Phosphoserine occurs at positions 368 and 432. A compositionally biased stretch (pro residues) spans 424–446 (QPPPPAPLSPPPPAPTAPQPPGD). At Lys-457 the chain carries N6-acetyllysine. The segment covering 476 to 499 (PRRSVPPATPATPTSPATVDAAVP) has biased composition (low complexity). A phosphoserine mark is found at Ser-490 and Ser-530. Positions 552 to 595 (QYPSESSVLEELGPEPEVPSAPNPPAAQPDDEEDEEELLLLQPE) are disordered. The segment covering 567–578 (PEVPSAPNPPAA) has biased composition (pro residues). A compositionally biased stretch (acidic residues) spans 580–589 (PDDEEDEEEL).

Interacts with Protein phosphatase 1 (PP1). Isoform 4 is predominantly expressed in leukocytes and spleen.

It is found in the cytoplasm. The protein resides in the cytoskeleton. Functionally, may target protein phosphatase 1 to F-actin cytoskeleton. The chain is Phostensin (PPP1R18) from Homo sapiens (Human).